Consider the following 620-residue polypeptide: Glutathione-regulated potassium-efflux system protein KefC (620 aa).

Topologically, residues 1 to 3 (MDS) are periplasmic. Residues 4-24 (HTLLQALIYLGSAALIVPIAV) traverse the membrane as a helical segment. A topological domain (cytoplasmic) is located at residue R25. Residues 26–46 (LGLGSVLGYLIAGCIIGPWGL) form a helical membrane-spanning segment. Residues 47–53 (RLVTDAE) lie on the Periplasmic side of the membrane. Residues 54–74 (SILHFAEIGVVLMLFVIGLEL) traverse the membrane as a helical segment. The Cytoplasmic portion of the chain corresponds to 75–89 (DPQRLWKLRASVFGG). Residues 90 to 110 (GALQMVVCGGLIGLFCMFLGL) form a helical membrane-spanning segment. Residues 111-113 (RWQ) lie on the Periplasmic side of the membrane. The helical transmembrane segment at 114-134 (VAELIGMTLALSSTAIAMQAM) threads the bilayer. Residues 135–148 (NERNLTVSQVGRSA) are Cytoplasmic-facing. Residues 149-169 (FAVLLFQDIAAIPLVAMIPLL) form a helical membrane-spanning segment. Over 170–177 (AASGASTT) the chain is Periplasmic. A helical transmembrane segment spans residues 178–198 (LGAFALSALKVAGALALVVLL). At 199–213 (GRYVTRPALRFVARS) the chain is on the cytoplasmic side. A helical transmembrane segment spans residues 214–233 (GLREVFSAVALFLVFGFGLL). Residues 234 to 236 (LEE) are Periplasmic-facing. A helical membrane pass occupies residues 237-254 (VGLSMAMGAFLAGVLLAS). The Cytoplasmic segment spans residues 255-269 (SEYRHALESDIEPFK). The chain crosses the membrane as a helical span at residues 270 to 290 (GLLLGLFFIGVGMSIDFGTLV). The Periplasmic segment spans residues 291–293 (ENP). A helical membrane pass occupies residues 294–314 (LRILLLLAGFLAIKIVMLWLV). At 315 to 326 (ARTLGVPAKQRR) the chain is on the cytoplasmic side. The chain crosses the membrane as a helical span at residues 327–347 (WFAVLLGQGSEFAFVVFGAAQ). Topologically, residues 348-358 (MADVLEPEWAK) are periplasmic. The chain crosses the membrane as a helical span at residues 359-379 (ALTLAVALSMAATPIFLVLLT). Topologically, residues 380 to 620 (RMEKTATGEA…ADEPEVKPSI (241 aa)) are cytoplasmic. An RCK N-terminal domain is found at 399-518 (QPRVIVAGFG…AGVAMPERET (120 aa)). Residues 599 to 620 (QGTAEGKHSGKAADEPEVKPSI) form a disordered region. Residues 603-620 (EGKHSGKAADEPEVKPSI) are compositionally biased toward basic and acidic residues.

Belongs to the monovalent cation:proton antiporter 2 (CPA2) transporter (TC 2.A.37) family. KefC subfamily. In terms of assembly, homodimer. Interacts with the regulatory subunit KefF.

Its subcellular location is the cell inner membrane. In terms of biological role, pore-forming subunit of a potassium efflux system that confers protection against electrophiles. Catalyzes K(+)/H(+) antiport. This Salmonella typhi protein is Glutathione-regulated potassium-efflux system protein KefC.